The primary structure comprises 750 residues: GTP pyrophosphokinase rsh (750 aa).

Residues 45–144 enclose the HD domain; that stretch reads YFSHPLEVAA…VKLADRLHNM (100 aa). The region spanning 390-451 is the TGS domain; it reads DQVFCFTPKG…KNGDEVDIIR (62 aa). Residues 587 to 613 form a disordered region; the sequence is AAKVDPAATTPKPGKRALPIRGTNPDL. An ACT domain is found at 676 to 750; it reads RISVSAINSP…SVSSAKRVNG (75 aa).

It belongs to the RelA/SpoT family.

It catalyses the reaction GTP + ATP = guanosine 3'-diphosphate 5'-triphosphate + AMP. Functions as a (p)ppGpp synthase. In eubacteria ppGpp (guanosine 3'-diphosphate 5'-diphosphate) is a mediator of the stringent response that coordinates a variety of cellular activities in response to changes in nutritional abundance. Plays a role in adaptation of Brucella to its intracellular host environment. In Brucella ovis (strain ATCC 25840 / 63/290 / NCTC 10512), this protein is GTP pyrophosphokinase rsh (rsh).